Here is a 320-residue protein sequence, read N- to C-terminus: Adhesin MafA 3 (320 aa).

A signal peptide spans 1-18 (MQARLLIPILFSVFILSA). A lipid anchor (N-palmitoyl cysteine) is attached at C19. C19 carries S-diacylglycerol cysteine lipidation. A compositionally biased stretch (polar residues) spans 288-298 (HTGNSAPSVET). The disordered stretch occupies residues 288-320 (HTGNSAPSVETDNSHEGYGYSDEVVRQHRQGQP).

The protein belongs to the MafA family.

Its subcellular location is the cell outer membrane. This is Adhesin MafA 3 (mafA3) from Neisseria meningitidis serogroup C / serotype 2a (strain ATCC 700532 / DSM 15464 / FAM18).